The primary structure comprises 490 residues: Ent-kaurenoic acid oxidase 1 (490 aa).

A helical transmembrane segment spans residues 6–26 (SWIPVWFPLMVLGCFGLNWLV). Residue C439 participates in heme binding.

It belongs to the cytochrome P450 family. It depends on heme as a cofactor. In terms of tissue distribution, widely expressed. Highly expressed in influorescence stem, influorescence, and silique tissue. Weakly expressed in cauline and rosette leaves. Expressed at a higher level in stem and influorescence than AtKAO2/CYP88A4.

The protein resides in the endoplasmic reticulum membrane. It catalyses the reaction ent-kaur-16-en-19-oate + 3 reduced [NADPH--hemoprotein reductase] + 3 O2 = gibberellin A12 + 3 oxidized [NADPH--hemoprotein reductase] + 4 H2O + 4 H(+). It carries out the reaction ent-kaur-16-en-19-oate + reduced [NADPH--hemoprotein reductase] + O2 = ent-7alpha-hydroxykaur-16-en-19-oate + oxidized [NADPH--hemoprotein reductase] + H2O + H(+). The enzyme catalyses ent-7alpha-hydroxykaur-16-en-19-oate + reduced [NADPH--hemoprotein reductase] + O2 = gibberellin A12 aldehyde + oxidized [NADPH--hemoprotein reductase] + 2 H2O + H(+). The catalysed reaction is gibberellin A12 aldehyde + reduced [NADPH--hemoprotein reductase] + O2 = gibberellin A12 + oxidized [NADPH--hemoprotein reductase] + H2O + 2 H(+). Its pathway is plant hormone biosynthesis; gibberellin biosynthesis. Functionally, catalyzes three successive oxidations of ent-kaurenoic acid giving gibberellin 12 (GA12), a key step in gibberellins (GAs) biosynthesis. GAs, which are involved many processes, including stem elongation, play a central role in plant development. In Arabidopsis thaliana (Mouse-ear cress), this protein is Ent-kaurenoic acid oxidase 1.